The chain runs to 955 residues: Glycine dehydrogenase (decarboxylating) (955 aa).

Position 702 is an N6-(pyridoxal phosphate)lysine (K702).

Belongs to the GcvP family. The glycine cleavage system is composed of four proteins: P, T, L and H. The cofactor is pyridoxal 5'-phosphate.

The enzyme catalyses N(6)-[(R)-lipoyl]-L-lysyl-[glycine-cleavage complex H protein] + glycine + H(+) = N(6)-[(R)-S(8)-aminomethyldihydrolipoyl]-L-lysyl-[glycine-cleavage complex H protein] + CO2. The glycine cleavage system catalyzes the degradation of glycine. The P protein binds the alpha-amino group of glycine through its pyridoxal phosphate cofactor; CO(2) is released and the remaining methylamine moiety is then transferred to the lipoamide cofactor of the H protein. The sequence is that of Glycine dehydrogenase (decarboxylating) from Stenotrophomonas maltophilia (strain K279a).